Here is a 592-residue protein sequence, read N- to C-terminus: Aspartate--tRNA ligase (592 aa).

Position 171 (Glu-171) interacts with L-aspartate. An aspartate region spans residues 195 to 198; that stretch reads QLFK. Residue Arg-217 coordinates L-aspartate. ATP is bound by residues 217-219 and Gln-226; that span reads RDE. His-448 is a binding site for L-aspartate. Glu-482 provides a ligand contact to ATP. Arg-489 contacts L-aspartate. Residue 534–537 participates in ATP binding; it reads GLDR.

It belongs to the class-II aminoacyl-tRNA synthetase family. Type 1 subfamily. Homodimer.

The protein resides in the cytoplasm. It catalyses the reaction tRNA(Asp) + L-aspartate + ATP = L-aspartyl-tRNA(Asp) + AMP + diphosphate. Catalyzes the attachment of L-aspartate to tRNA(Asp) in a two-step reaction: L-aspartate is first activated by ATP to form Asp-AMP and then transferred to the acceptor end of tRNA(Asp). This Vibrio parahaemolyticus serotype O3:K6 (strain RIMD 2210633) protein is Aspartate--tRNA ligase.